Here is a 200-residue protein sequence, read N- to C-terminus: Glutathione peroxidase 1 (200 aa).

Ser31 carries the phosphoserine modification. The active site involves Sec46. Position 46 (Sec46) is a non-standard amino acid, selenocysteine. Lys85 and Lys111 each carry N6-acetyllysine; alternate. N6-succinyllysine; alternate is present on residues Lys85 and Lys111. Lys118 bears the N6-acetyllysine mark. An N6-acetyllysine; alternate modification is found at Lys145. An N6-succinyllysine; alternate modification is found at Lys145. Ser194 is modified (phosphoserine).

It belongs to the glutathione peroxidase family. As to quaternary structure, homotetramer. Interacts with MIEN1. Post-translationally, during periods of oxidative stress, Sec-46 may react with a superoxide radical, irreversibly lose hydroselenide and be converted to dehydroalanine.

The protein resides in the cytoplasm. It localises to the mitochondrion. The catalysed reaction is 2 glutathione + H2O2 = glutathione disulfide + 2 H2O. It catalyses the reaction a hydroperoxy polyunsaturated fatty acid + 2 glutathione = a hydroxy polyunsaturated fatty acid + glutathione disulfide + H2O. The enzyme catalyses tert-butyl hydroperoxide + 2 glutathione = tert-butanol + glutathione disulfide + H2O. It carries out the reaction cumene hydroperoxide + 2 glutathione = 2-phenylpropan-2-ol + glutathione disulfide + H2O. The catalysed reaction is (13S)-hydroperoxy-(9Z,11E)-octadecadienoate + 2 glutathione = (13S)-hydroxy-(9Z,11E)-octadecadienoate + glutathione disulfide + H2O. It catalyses the reaction (9S)-hydroperoxy-(10E,12Z)-octadecadienoate + 2 glutathione = (9S)-hydroxy-(10E,12Z)-octadecadienoate + glutathione disulfide + H2O. The enzyme catalyses (5S)-hydroperoxy-(6E,8Z,11Z,14Z)-eicosatetraenoate + 2 glutathione = (5S)-hydroxy-(6E,8Z,11Z,14Z)-eicosatetraenoate + glutathione disulfide + H2O. It carries out the reaction (12S)-hydroperoxy-(5Z,8Z,10E,14Z)-eicosatetraenoate + 2 glutathione = (12S)-hydroxy-(5Z,8Z,10E,14Z)-eicosatetraenoate + glutathione disulfide + H2O. The catalysed reaction is (12R)-hydroperoxy-(5Z,8Z,10E,14Z)-eicosatetraenoate + 2 glutathione = (12R)-hydroxy-(5Z,8Z,10E,14Z)-eicosatetraenoate + glutathione disulfide + H2O. It catalyses the reaction (15S)-hydroperoxy-(5Z,8Z,11Z,13E)-eicosatetraenoate + 2 glutathione = (15S)-hydroxy-(5Z,8Z,11Z,13E)-eicosatetraenoate + glutathione disulfide + H2O. The enzyme catalyses (5S)-hydroperoxy-(6E,8Z,11Z,14Z,17Z)-eicosapentaenoate + 2 glutathione = (5S)-hydroxy-(6E,8Z,11Z,14Z,17Z)-eicosapentaenoate + glutathione disulfide + H2O. It carries out the reaction (12S)-hydroperoxy-(5Z,8Z,10E,14Z,17Z)-eicosapentaenoate + 2 glutathione = (12S)-hydroxy-(5Z,8Z,10E,14Z,17Z)-eicosapentaenoate + glutathione disulfide + H2O. The catalysed reaction is (15S)-hydroperoxy-(5Z,8Z,11Z,13E,17Z)-eicosapentaenoate + 2 glutathione = (15S)-hydroxy-(5Z,8Z,11Z,13E,17Z)-eicosapentaenoate + glutathione disulfide + H2O. It catalyses the reaction (15S)-hydroperoxy-(11Z,13E)-eicosadienoate + 2 glutathione = (15S)-hydroxy-(11Z,13E)-eicosadienoate + glutathione disulfide + H2O. The enzyme catalyses (17S)-hydroperoxy-(4Z,7Z,10Z,13Z,15E,19Z)-docosahexaenoate + 2 glutathione = (17S)-hydroxy-(4Z,7Z,10Z,13Z,15E,19Z)-docosahexaenoate + glutathione disulfide + H2O. Catalyzes the reduction of hydroperoxides in a glutathione-dependent manner thus regulating cellular redox homeostasis. Can reduce small soluble hydroperoxides such as H2O2, cumene hydroperoxide and tert-butyl hydroperoxide, as well as several fatty acid-derived hydroperoxides. In platelets catalyzes the reduction of 12-hydroperoxyeicosatetraenoic acid, the primary product of the arachidonate 12-lipoxygenase pathway. The sequence is that of Glutathione peroxidase 1 (GPX1) from Oryctolagus cuniculus (Rabbit).